We begin with the raw amino-acid sequence, 341 residues long: Protein phosphatase methylesterase 1 (341 aa).

Residues 1 to 24 (MAFRKEELSQTLYENESEQSSETK) form a disordered region. Positions 9 to 20 (SQTLYENESEQS) are enriched in polar residues. Active-site residues include S153, D178, and H304.

It belongs to the AB hydrolase superfamily.

The enzyme catalyses [phosphatase 2A protein]-C-terminal L-leucine methyl ester + H2O = [phosphatase 2A protein]-C-terminal L-leucine + methanol + H(+). Functionally, demethylates proteins that have been reversibly carboxymethylated. Demethylates the phosphatase PP2A catalytic subunit. This chain is Protein phosphatase methylesterase 1 (ppe1), found in Schizosaccharomyces pombe (strain 972 / ATCC 24843) (Fission yeast).